Reading from the N-terminus, the 209-residue chain is Probable GTP-binding protein EngB (209 aa).

The EngB-type G domain occupies 22-198 (TPLEIAFVGR…NRTVGSWFDA (177 aa)). Residues S37 and T59 each coordinate Mg(2+).

The protein belongs to the TRAFAC class TrmE-Era-EngA-EngB-Septin-like GTPase superfamily. EngB GTPase family. The cofactor is Mg(2+).

Its function is as follows. Necessary for normal cell division and for the maintenance of normal septation. The polypeptide is Probable GTP-binding protein EngB (Neisseria gonorrhoeae).